We begin with the raw amino-acid sequence, 251 residues long: Hydroxyacylglutathione hydrolase GloB (251 aa).

Zn(2+) is bound by residues H53, H55, D57, H58, H110, and D127. Residues 136–138 (RLF), 165–167 (HEY), and 245–248 (RSKK) each bind substrate. H165 lines the Zn(2+) pocket.

Belongs to the metallo-beta-lactamase superfamily. Glyoxalase II family. As to quaternary structure, monomer. Zn(2+) is required as a cofactor.

It carries out the reaction an S-(2-hydroxyacyl)glutathione + H2O = a 2-hydroxy carboxylate + glutathione + H(+). The enzyme catalyses (R)-S-lactoylglutathione + H2O = (R)-lactate + glutathione + H(+). The protein operates within secondary metabolite metabolism; methylglyoxal degradation; (R)-lactate from methylglyoxal: step 2/2. Its activity is regulated as follows. Is inhibited by Cu(2+). Its function is as follows. Type II glyoxalase that catalyzes the hydrolysis of (R)-S-lactoylglutathione to (R)-lactate and glutathione. Is more efficient than the isozyme GloC, and plays a major contribution to methylglyoxal (MG) detoxification in E.coli. The two isoenzymes have additive effects and ensure maximal MG degradation. The chain is Hydroxyacylglutathione hydrolase GloB from Escherichia coli (strain K12).